We begin with the raw amino-acid sequence, 88 residues long: UPF0297 protein BT9727_4120 (88 aa).

The protein belongs to the UPF0297 family.

This Bacillus thuringiensis subsp. konkukian (strain 97-27) protein is UPF0297 protein BT9727_4120.